Consider the following 294-residue polypeptide: Ribosomal protein L11 methyltransferase (294 aa).

Threonine 146, glycine 167, aspartate 189, and asparagine 231 together coordinate S-adenosyl-L-methionine.

The protein belongs to the methyltransferase superfamily. PrmA family.

It is found in the cytoplasm. The catalysed reaction is L-lysyl-[protein] + 3 S-adenosyl-L-methionine = N(6),N(6),N(6)-trimethyl-L-lysyl-[protein] + 3 S-adenosyl-L-homocysteine + 3 H(+). In terms of biological role, methylates ribosomal protein L11. The protein is Ribosomal protein L11 methyltransferase of Photobacterium profundum (strain SS9).